A 226-amino-acid chain; its full sequence is Matrix protein (226 aa).

Positions 2 to 4 (KSL) match the dynamin binding motif. The PPXY motif signature appears at 28-31 (PPSY). Positions 40–43 (PSAP) match the PTAP/PSAP motif motif.

Belongs to the vesiculoviruses matrix protein family. As to quaternary structure, homomultimer. Interacts with viral nucleocapsid; this interaction contributes to the virion assembly. Interacts with the viral envelope glycoprotein; this interaction contributes to the virion assembly. Interacts with host RAE1-NUP98 complex. Interacts with host NEDD4 and TSG101. Interacts with host dynamin. Interacts with host NDUFAF4; the interaction inhibits viral propagation and is independent of interferon activation. Interacts with host GTF2H5; the interaction may inhibit host transcription. Phosphorylated by host.

It localises to the virion. The protein localises to the host endomembrane system. Its subcellular location is the host nucleus membrane. It is found in the host nucleus. The protein resides in the host cytoplasm. Its function is as follows. Forms a double layer around the helical nucleocapsid, the inner matrix layer binding to the N helix and the outer matrix layer binding to the envelope glycoprotein. Plays a major role in assembly and budding of virion, by recruiting cellular partners of the ESCRT complexes that play a key role in releasing the budding particle from the host membrane. Condensates the ribonucleocapsid core during virus assembly. Inhibits the host mRNA nuclear export thereby inducing the shut off of cellular transcription and preventing the interferon signaling and the establishment of antiviral state in infected cells. This shutoff presumably inhibits interferon signaling and thus establishment of antiviral state in virus infected cells. Induces cell-rounding, cytoskeleton disorganization and apoptosis in infected cell. Inhibits host transcription, possibly through interaction with host DNA repair factor IIH/TFIIH GTF2H5 subunit. The protein is Matrix protein (M) of Isfahan virus (ISFV).